The following is a 372-amino-acid chain: Cytochrome b (372 aa).

Transmembrane regions (helical) follow at residues 25–45 (FGSMLLTCLALQISTGFFLAI), 69–90 (WTMQNLHAIGASMFFICIYIHI), 105–125 (WLSGTVLLITLMATAFFGYVL), and 170–190 (FFALHFILPFLIVSLSSIHII). Residues H75 and H89 each contribute to the heme b site. H174 and H188 together coordinate heme b. H193 serves as a coordination point for a ubiquinone. Transmembrane regions (helical) follow at residues 218–238 (YKDILMITVMITTLFSIMAFA), 280–300 (LGGTLALLMSVIILTTAPFTH), 312–332 (LAQMLFWTLIATFITITWTAT), and 339–358 (FILISQMASIIYFSFFIINP).

The protein belongs to the cytochrome b family. As to quaternary structure, the cytochrome bc1 complex contains 3 respiratory subunits (MT-CYB, CYC1 and UQCRFS1), 2 core proteins (UQCRC1 and UQCRC2) and probably 6 low-molecular weight proteins. Heme b is required as a cofactor.

Its subcellular location is the mitochondrion inner membrane. Component of the ubiquinol-cytochrome c reductase complex (complex III or cytochrome b-c1 complex) that is part of the mitochondrial respiratory chain. The b-c1 complex mediates electron transfer from ubiquinol to cytochrome c. Contributes to the generation of a proton gradient across the mitochondrial membrane that is then used for ATP synthesis. The polypeptide is Cytochrome b (MT-CYB) (Acanthophis antarcticus (Common death adder)).